The sequence spans 100 residues: Acylphosphatase (100 aa).

An Acylphosphatase-like domain is found at 14-100; it reads RWRFFVEGKV…TGADWFEIRS (87 aa). Catalysis depends on residues Arg29 and Asn47.

This sequence belongs to the acylphosphatase family.

It carries out the reaction an acyl phosphate + H2O = a carboxylate + phosphate + H(+). In Synechococcus sp. (strain WH7803), this protein is Acylphosphatase (acyP).